Reading from the N-terminus, the 87-residue chain is Acylphosphatase (87 aa).

The Acylphosphatase-like domain occupies 1 to 87 (MAWVHGRVQG…EDYQDFRIRY (87 aa)). Residues Arg14 and Asn32 contribute to the active site.

It belongs to the acylphosphatase family.

It catalyses the reaction an acyl phosphate + H2O = a carboxylate + phosphate + H(+). This chain is Acylphosphatase (acyP), found in Cronobacter sakazakii (strain ATCC BAA-894) (Enterobacter sakazakii).